Consider the following 507-residue polypeptide: Aromatase (507 aa).

Cys436 provides a ligand contact to heme.

The protein belongs to the cytochrome P450 family. Requires heme as cofactor.

The protein resides in the membrane. It carries out the reaction testosterone + 3 reduced [NADPH--hemoprotein reductase] + 3 O2 = 17beta-estradiol + formate + 3 oxidized [NADPH--hemoprotein reductase] + 4 H2O + 4 H(+). It catalyses the reaction androst-4-ene-3,17-dione + 3 reduced [NADPH--hemoprotein reductase] + 3 O2 = estrone + formate + 3 oxidized [NADPH--hemoprotein reductase] + 4 H2O + 4 H(+). Its function is as follows. Catalyzes the formation of aromatic C18 estrogens from C19 androgens. In Gallus gallus (Chicken), this protein is Aromatase (CYP19A1).